We begin with the raw amino-acid sequence, 174 residues long: NADH-ubiquinone oxidoreductase chain 6 (174 aa).

4 helical membrane-spanning segments follow: residues 24 to 44 (LALG…SGLM), 53 to 73 (ILFL…TSLA), 82 to 102 (IKLT…SMIL), and 143 to 163 (FVTI…VKIT).

Belongs to the complex I subunit 6 family.

Its subcellular location is the mitochondrion membrane. The catalysed reaction is a ubiquinone + NADH + 5 H(+)(in) = a ubiquinol + NAD(+) + 4 H(+)(out). Core subunit of the mitochondrial membrane respiratory chain NADH dehydrogenase (Complex I) that is believed to belong to the minimal assembly required for catalysis. Complex I functions in the transfer of electrons from NADH to the respiratory chain. The immediate electron acceptor for the enzyme is believed to be ubiquinone. This chain is NADH-ubiquinone oxidoreductase chain 6 (mt:ND6), found in Drosophila yakuba (Fruit fly).